The following is a 232-amino-acid chain: Octanoyltransferase (232 aa).

In terms of domain architecture, BPL/LPL catalytic spans 44–219; the sequence is EHTADEVWVV…QLARQFGLVL (176 aa). Substrate-binding positions include 83-90, 150-152, and 163-165; these read RGGQVTYH, ALG, and GLS. Cys-181 (acyl-thioester intermediate) is an active-site residue.

The protein belongs to the LipB family.

The protein resides in the cytoplasm. It catalyses the reaction octanoyl-[ACP] + L-lysyl-[protein] = N(6)-octanoyl-L-lysyl-[protein] + holo-[ACP] + H(+). It participates in protein modification; protein lipoylation via endogenous pathway; protein N(6)-(lipoyl)lysine from octanoyl-[acyl-carrier-protein]: step 1/2. Functionally, catalyzes the transfer of endogenously produced octanoic acid from octanoyl-acyl-carrier-protein onto the lipoyl domains of lipoate-dependent enzymes. Lipoyl-ACP can also act as a substrate although octanoyl-ACP is likely to be the physiological substrate. In Xanthomonas euvesicatoria pv. vesicatoria (strain 85-10) (Xanthomonas campestris pv. vesicatoria), this protein is Octanoyltransferase.